The primary structure comprises 404 residues: Cysteine desulfurase IscS (404 aa).

Pyridoxal 5'-phosphate contacts are provided by residues 75 to 76 (AT), N155, Q183, and 203 to 205 (TGH). K206 carries the N6-(pyridoxal phosphate)lysine modification. Residue T243 coordinates pyridoxal 5'-phosphate. C328 acts as the Cysteine persulfide intermediate in catalysis. C328 contacts [2Fe-2S] cluster.

Belongs to the class-V pyridoxal-phosphate-dependent aminotransferase family. NifS/IscS subfamily. As to quaternary structure, homodimer. Forms a heterotetramer with IscU, interacts with other sulfur acceptors. Pyridoxal 5'-phosphate serves as cofactor.

It localises to the cytoplasm. The enzyme catalyses (sulfur carrier)-H + L-cysteine = (sulfur carrier)-SH + L-alanine. It participates in cofactor biosynthesis; iron-sulfur cluster biosynthesis. Functionally, master enzyme that delivers sulfur to a number of partners involved in Fe-S cluster assembly, tRNA modification or cofactor biosynthesis. Catalyzes the removal of elemental sulfur atoms from cysteine to produce alanine. Functions as a sulfur delivery protein for Fe-S cluster synthesis onto IscU, an Fe-S scaffold assembly protein, as well as other S acceptor proteins. This Cronobacter sakazakii (strain ATCC BAA-894) (Enterobacter sakazakii) protein is Cysteine desulfurase IscS.